The sequence spans 161 residues: 6,7-dimethyl-8-ribityllumazine synthase (161 aa).

5-amino-6-(D-ribitylamino)uracil-binding positions include Trp31, 63 to 65 (SFE), and 85 to 87 (VVI). 90 to 91 (GT) lines the (2S)-2-hydroxy-3-oxobutyl phosphate pocket. The active-site Proton donor is the His93. Phe118 serves as a coordination point for 5-amino-6-(D-ribitylamino)uracil. Arg132 is a binding site for (2S)-2-hydroxy-3-oxobutyl phosphate.

It belongs to the DMRL synthase family.

It carries out the reaction (2S)-2-hydroxy-3-oxobutyl phosphate + 5-amino-6-(D-ribitylamino)uracil = 6,7-dimethyl-8-(1-D-ribityl)lumazine + phosphate + 2 H2O + H(+). The protein operates within cofactor biosynthesis; riboflavin biosynthesis; riboflavin from 2-hydroxy-3-oxobutyl phosphate and 5-amino-6-(D-ribitylamino)uracil: step 1/2. Catalyzes the formation of 6,7-dimethyl-8-ribityllumazine by condensation of 5-amino-6-(D-ribitylamino)uracil with 3,4-dihydroxy-2-butanone 4-phosphate. This is the penultimate step in the biosynthesis of riboflavin. The sequence is that of 6,7-dimethyl-8-ribityllumazine synthase from Pseudarthrobacter chlorophenolicus (strain ATCC 700700 / DSM 12829 / CIP 107037 / JCM 12360 / KCTC 9906 / NCIMB 13794 / A6) (Arthrobacter chlorophenolicus).